The following is a 340-amino-acid chain: MTQAVLKELAKAELHCHLDGSLSLPAIRKLANMADIILPSSDKELRKYVIAPAQTESLVDYLKTFEFIRPLLQTKEALRFAAYDVARQAALENVIYIEIRFAPELSMDKGLTASDTVLAVLEGLADAQKEFNIVARALVCGMRQSSHKTTKDIIKHIVDLAPKGLVGFDFAGDEFSYPTDSLVDLIQEVKRSGYPMTLHAGECGCAKHIADSLNLGIKRMGHVTALTGQRDLIKRFVEEDAVAEMCLTSNLQTKAASSIQSFPYQELYDAGGKITINTDNRTVSDTNLTKEYSLFVTYFGTKIEDFLVFNQNAVKASFTSDSEKDTLLHKLQENYDSYLK.

His-15 and His-17 together coordinate Zn(2+). Positions 17, 19, and 172 each coordinate substrate. Position 199 (His-199) interacts with Zn(2+). The Proton donor role is filled by Glu-202. Asp-279 lines the Zn(2+) pocket.

This sequence belongs to the metallo-dependent hydrolases superfamily. Adenosine and AMP deaminases family. Adenosine deaminase subfamily. Zn(2+) is required as a cofactor.

The catalysed reaction is adenosine + H2O + H(+) = inosine + NH4(+). It catalyses the reaction 2'-deoxyadenosine + H2O + H(+) = 2'-deoxyinosine + NH4(+). Catalyzes the hydrolytic deamination of adenosine and 2-deoxyadenosine. The chain is Adenosine deaminase from Streptococcus agalactiae serotype III (strain NEM316).